Here is a 1088-residue protein sequence, read N- to C-terminus: DNA ligase 4 (1088 aa).

Disordered regions lie at residues 1-56 (MALS…KFND) and 73-117 (TTTT…TTTT). 2 stretches are compositionally biased toward low complexity: residues 25–53 (DFKNQQQINTSKTTNNNNNINNKNNYNNK) and 73–90 (TTTTTTKNTSTNSNINKT). A compositionally biased stretch (acidic residues) spans 95 to 105 (DDIFDDEDEDS). Residues Glu414, Lys416, Arg421, Glu467, Phe514, Glu574, Lys579, Lys596, and Lys598 each coordinate ATP. The N6-AMP-lysine intermediate role is filled by Lys416. Glu467 serves as a coordination point for Mg(2+). Glu574 provides a ligand contact to Mg(2+). 2 BRCT domains span residues 827 to 917 (PTQN…PKYM) and 984 to 1088 (CWWS…EILD).

The protein belongs to the ATP-dependent DNA ligase family. Mg(2+) is required as a cofactor.

It localises to the nucleus. The enzyme catalyses ATP + (deoxyribonucleotide)n-3'-hydroxyl + 5'-phospho-(deoxyribonucleotide)m = (deoxyribonucleotide)n+m + AMP + diphosphate.. DNA ligase involved in DNA non-homologous end joining (NHEJ); required for double-strand break (DSB) repair. This Dictyostelium discoideum (Social amoeba) protein is DNA ligase 4 (lig4).